A 188-amino-acid chain; its full sequence is NADH-quinone oxidoreductase subunit B (188 aa).

Residues Cys67, Cys68, Cys132, and Cys162 each coordinate [4Fe-4S] cluster.

It belongs to the complex I 20 kDa subunit family. NDH-1 is composed of 14 different subunits. Subunits NuoB, C, D, E, F, and G constitute the peripheral sector of the complex. [4Fe-4S] cluster is required as a cofactor.

The protein resides in the cell inner membrane. The enzyme catalyses a quinone + NADH + 5 H(+)(in) = a quinol + NAD(+) + 4 H(+)(out). In terms of biological role, NDH-1 shuttles electrons from NADH, via FMN and iron-sulfur (Fe-S) centers, to quinones in the respiratory chain. Couples the redox reaction to proton translocation (for every two electrons transferred, four hydrogen ions are translocated across the cytoplasmic membrane), and thus conserves the redox energy in a proton gradient. The chain is NADH-quinone oxidoreductase subunit B from Maricaulis maris (strain MCS10) (Caulobacter maris).